The sequence spans 553 residues: Hydroxylamine reductase (553 aa).

4 residues coordinate [2Fe-2S] cluster: cysteine 3, cysteine 6, cysteine 18, and cysteine 25. 8 residues coordinate hybrid [4Fe-2O-2S] cluster: histidine 252, glutamate 276, cysteine 320, cysteine 408, cysteine 436, cysteine 461, glutamate 495, and lysine 497. Cysteine 408 is subject to Cysteine persulfide.

This sequence belongs to the HCP family. [2Fe-2S] cluster is required as a cofactor. The cofactor is hybrid [4Fe-2O-2S] cluster.

It is found in the cytoplasm. The catalysed reaction is A + NH4(+) + H2O = hydroxylamine + AH2 + H(+). In terms of biological role, catalyzes the reduction of hydroxylamine to form NH(3) and H(2)O. The protein is Hydroxylamine reductase of Aliivibrio fischeri (strain MJ11) (Vibrio fischeri).